The chain runs to 98 residues: Small ribosomal subunit protein uS19c (98 aa).

It belongs to the universal ribosomal protein uS19 family.

The protein resides in the plastid. The protein localises to the chloroplast. In terms of biological role, protein S19 forms a complex with S13 that binds strongly to the 16S ribosomal RNA. The sequence is that of Small ribosomal subunit protein uS19c from Jasminum nudiflorum (Winter jasmine).